We begin with the raw amino-acid sequence, 709 residues long: Kelch-like protein 11 (709 aa).

An N-terminal signal peptide occupies residues 1–15 (MAAAVAAAAAAAAAA). In terms of domain architecture, BTB spans 95–171 (CDITLCFGGA…MYTGRIRVST (77 aa)). One can recognise a BACK domain in the interval 206-308 (CVAIHSLAHM…KPTYLTRHVK (103 aa)). 5 Kelch repeats span residues 361 to 408 (VIMV…ITES), 409 to 454 (YVYV…EVKG), 456 to 502 (LYSI…AIED), 504 to 557 (FVYI…VVNS), and 611 to 662 (DVFI…HVRI). Serine 466 bears the Phosphoserine mark.

Homodimer. Interacts with CUL3. Component of a cullin-RING-based BCR (BTB-CUL3-RBX1) E3 ubiquitin-protein ligase complex.

Functionally, component of a cullin-RING-based BCR (BTB-CUL3-RBX1) E3 ubiquitin-protein ligase complex that mediates the ubiquitination of target proteins, leading most often to their proteasomal degradation. In Mus musculus (Mouse), this protein is Kelch-like protein 11 (Klhl11).